Consider the following 367-residue polypeptide: MEAYKQWVWRNREYVQSFGSFANGLTWLLPEKFSASEIGPEAVTAFLGIFSTINEHIIENAPTPRGHVGSSGNDPSLSYPLLIAILKDLETVVEVAAEHFYGDKKWNYIILTEAMKAVIRLALFRNSGYKMLLQGGETPNEEKDSNQSESQNRAGNSGRNLGPHGLGNQNHHNPWNLEGRAMSALSSFGQNARTTTSSTPGWSRRIQHQQAVIEPPMIKERRRTMSELLTEKGVNGALFAIGEVLYITRPLIYVLFIRKYGVRSWIPWAISLSVDTLGMGLLANSKWWGEKSKQVHFSGPEKDELRRRKLIWALYLMRDPFFTKYTRQKLESSQKKLELIPLIGFLTEKIVELLEGAQSRYTYISGS.

Positions 135–173 are disordered; that stretch reads GGETPNEEKDSNQSESQNRAGNSGRNLGPHGLGNQNHHN. The segment covering 147-159 has biased composition (polar residues); it reads QSESQNRAGNSGR. The next 2 membrane-spanning stretches (helical) occupy residues 237–257 and 264–284; these read ALFA…VLFI and SWIP…LLAN.

The protein belongs to the peroxin-16 family. As to quaternary structure, interacts with APEM9 (via both N- and C-terminus). Post-translationally, the detection of an additional immunorelated polypeptide of 52 kDa suggests a post-translational modification of PEX16. Expressed in roots, siliques, seeds, cotyledons, leaves and flowers. Low expression in leaves and roots.

The protein localises to the peroxisome membrane. The protein resides in the endoplasmic reticulum membrane. Involved in the formation of peroxisomes, lipid bodies and protein bodies. The sequence is that of Peroxisome biogenesis protein 16 from Arabidopsis thaliana (Mouse-ear cress).